Consider the following 384-residue polypeptide: Geranylgeranyl pyrophosphate synthase (384 aa).

Disordered regions lie at residues 1 to 25 and 39 to 78; these read MVPNANSNTVSLQSPNAIPPRTSST and RPVPESDWLGQNNTRNRSSSTTAIPLTGMHATGPQDPARY. The span at 47–62 shows a compositional bias: polar residues; it reads LGQNNTRNRSSSTTAI. Residues K112, R115, and H144 each coordinate isopentenyl diphosphate. Mg(2+) is bound by residues D151 and D155. R160 is a dimethylallyl diphosphate binding site. R161 provides a ligand contact to isopentenyl diphosphate. Residues K238, T239, and Q272 each coordinate dimethylallyl diphosphate. D275 contributes to the Mg(2+) binding site. Dimethylallyl diphosphate is bound by residues N279, K289, and K299.

The protein belongs to the FPP/GGPP synthase family. The cofactor is Mg(2+).

The catalysed reaction is isopentenyl diphosphate + dimethylallyl diphosphate = (2E)-geranyl diphosphate + diphosphate. It catalyses the reaction isopentenyl diphosphate + (2E)-geranyl diphosphate = (2E,6E)-farnesyl diphosphate + diphosphate. It carries out the reaction isopentenyl diphosphate + (2E,6E)-farnesyl diphosphate = (2E,6E,10E)-geranylgeranyl diphosphate + diphosphate. It participates in secondary metabolite biosynthesis. In terms of biological role, catalyzes the trans-addition of the 3 molecules of isopentenyl diphosphate (IPP) onto dimethylallyl diphosphate (DMAPP) to form geranylgeranyl pyrophosphate (GGPP). GGPP is a precursor for the biosynthesis of many secondary metabolites, including the indole diterpenes nodulisporic acids (NA). The polypeptide is Geranylgeranyl pyrophosphate synthase (Hypoxylon pulicicidum).